Reading from the N-terminus, the 301-residue chain is MDGIIPLYKERGMTSFACVSRLRQILKTKKIGHSGTLDPGVAGVLPICVGNATKVVDYLMQSGKQYQGELLIGFATTTQDLDGDKIEEKVVADEIPTSEILSAMNSLTGTIIQIPPMYSAVKVNGKKLYEYARAGETVERPKRQVTISKFELLSSKYDKKNKQQRIRFNVECSKGTYIRTLVVDLARKLGYPGVMSLLTRLKSGGFTLDQTLSLDDVRDAVATQTLQQYLYPLDYALKDYPQLTIQVAQWKKVQNGGWLSPSELNTSEKEIVLSFDGQVKALYHFDPKNKMYKPTKMFAVN.

Asp-38 acts as the Nucleophile in catalysis.

The protein belongs to the pseudouridine synthase TruB family. Type 1 subfamily.

It catalyses the reaction uridine(55) in tRNA = pseudouridine(55) in tRNA. Functionally, responsible for synthesis of pseudouridine from uracil-55 in the psi GC loop of transfer RNAs. The protein is tRNA pseudouridine synthase B of Limosilactobacillus reuteri (strain DSM 20016) (Lactobacillus reuteri).